Consider the following 449-residue polypeptide: UDP-N-acetylmuramoylalanine--D-glutamate ligase (449 aa).

107–113 contributes to the ATP binding site; the sequence is GSNGKST.

Belongs to the MurCDEF family.

Its subcellular location is the cytoplasm. The catalysed reaction is UDP-N-acetyl-alpha-D-muramoyl-L-alanine + D-glutamate + ATP = UDP-N-acetyl-alpha-D-muramoyl-L-alanyl-D-glutamate + ADP + phosphate + H(+). Its pathway is cell wall biogenesis; peptidoglycan biosynthesis. In terms of biological role, cell wall formation. Catalyzes the addition of glutamate to the nucleotide precursor UDP-N-acetylmuramoyl-L-alanine (UMA). This Hydrogenovibrio crunogenus (strain DSM 25203 / XCL-2) (Thiomicrospira crunogena) protein is UDP-N-acetylmuramoylalanine--D-glutamate ligase.